We begin with the raw amino-acid sequence, 138 residues long: Ribulose bisphosphate carboxylase small subunit (138 aa).

The protein belongs to the RuBisCO small chain family. In terms of assembly, heterohexadecamer of 8 large and 8 small subunits.

The protein localises to the plastid. The protein resides in the chloroplast. In terms of biological role, ruBisCO catalyzes two reactions: the carboxylation of D-ribulose 1,5-bisphosphate, the primary event in carbon dioxide fixation, as well as the oxidative fragmentation of the pentose substrate in the photorespiration process. Both reactions occur simultaneously and in competition at the same active site. Although the small subunit is not catalytic it is essential for maximal activity. This Pyropia dentata (Red alga) protein is Ribulose bisphosphate carboxylase small subunit.